A 160-amino-acid chain; its full sequence is Heat shock protein beta-6 (160 aa).

Residues 1-72 (MEIPVPVQPS…PVAQVPTDPG (72 aa)) form an involved in stabilization of the HSPB1:HSBP6 heterodimer region. S16 is subject to Phosphoserine; by PKA. Residues 55–160 (LRAPSVALPV…AQAPPPAAAK (106 aa)) form the sHSP domain. Position 66 is a deamidated glutamine (Q66).

The protein belongs to the small heat shock protein (HSP20) family. Homodimer. Small heat shock proteins form high molecular mass oligomers containing variable number of monomers; these oligomers display a very flexible quaternary structure easily exchanging their subunits. Heterooligomer with HSPB1; formed through oligomerization of HSPB1:HSBP6 dimers; subunit exchange leads to formation of at least two different heterooligomeric complexes, differing in variable quantities of HSPB1 and HSPB6 homodimers in addition to HSPB1:HSPB6 heterodimers. Heterooligomer with CRYAB; large heterooligomers consist of CRYAB homodimers and HSPB5:HSPB6 heterodimers but lacking HSPB6 homodimers. Interacts with BAG3. Interacts (phosphorylated) with YWHAZ. Interacts with PDE4A and PDE4D; required for maintenance of the non-phosphorylated state of HSPB6 under basal conditions. Interacts with KDR. Interacts with PRKD1. Post-translationally, the N-terminus is blocked. In terms of processing, phosphorylated at Ser-16 by PKA and probably PKD1K; required to protect cardiomyocytes from apoptosis.

It localises to the cytoplasm. The protein localises to the nucleus. The protein resides in the secreted. Its function is as follows. Small heat shock protein which functions as a molecular chaperone probably maintaining denatured proteins in a folding-competent state. Seems to have versatile functions in various biological processes. Plays a role in regulating muscle function such as smooth muscle vasorelaxation and cardiac myocyte contractility. May regulate myocardial angiogenesis implicating KDR. Overexpression mediates cardioprotection and angiogenesis after induced damage. Stabilizes monomeric YWHAZ thereby supporting YWHAZ chaperone-like activity. This Homo sapiens (Human) protein is Heat shock protein beta-6 (HSPB6).